The primary structure comprises 351 residues: Phosphoribosylformylglycinamidine cyclo-ligase (351 aa).

The protein belongs to the AIR synthase family.

It localises to the cytoplasm. The enzyme catalyses 2-formamido-N(1)-(5-O-phospho-beta-D-ribosyl)acetamidine + ATP = 5-amino-1-(5-phospho-beta-D-ribosyl)imidazole + ADP + phosphate + H(+). Its pathway is purine metabolism; IMP biosynthesis via de novo pathway; 5-amino-1-(5-phospho-D-ribosyl)imidazole from N(2)-formyl-N(1)-(5-phospho-D-ribosyl)glycinamide: step 2/2. The sequence is that of Phosphoribosylformylglycinamidine cyclo-ligase from Burkholderia lata (strain ATCC 17760 / DSM 23089 / LMG 22485 / NCIMB 9086 / R18194 / 383).